Here is a 226-residue protein sequence, read N- to C-terminus: Putative O-methyltransferase Mvan_4497 (226 aa).

S-adenosyl-L-methionine-binding positions include valine 53, glutamate 75, 77 to 78 (GT), serine 83, aspartate 101, and valine 102. Aspartate 149 is a substrate binding site.

Belongs to the class I-like SAM-binding methyltransferase superfamily. Cation-dependent O-methyltransferase family.

This is Putative O-methyltransferase Mvan_4497 from Mycolicibacterium vanbaalenii (strain DSM 7251 / JCM 13017 / BCRC 16820 / KCTC 9966 / NRRL B-24157 / PYR-1) (Mycobacterium vanbaalenii).